We begin with the raw amino-acid sequence, 392 residues long: NAD(P)H-quinone oxidoreductase subunit H (392 aa).

Belongs to the complex I 49 kDa subunit family. As to quaternary structure, NDH-1 can be composed of about 15 different subunits; different subcomplexes with different compositions have been identified which probably have different functions.

Its subcellular location is the cellular thylakoid membrane. It carries out the reaction a plastoquinone + NADH + (n+1) H(+)(in) = a plastoquinol + NAD(+) + n H(+)(out). The enzyme catalyses a plastoquinone + NADPH + (n+1) H(+)(in) = a plastoquinol + NADP(+) + n H(+)(out). In terms of biological role, NDH-1 shuttles electrons from an unknown electron donor, via FMN and iron-sulfur (Fe-S) centers, to quinones in the respiratory and/or the photosynthetic chain. The immediate electron acceptor for the enzyme in this species is believed to be plastoquinone. Couples the redox reaction to proton translocation, and thus conserves the redox energy in a proton gradient. Cyanobacterial NDH-1 also plays a role in inorganic carbon-concentration. The polypeptide is NAD(P)H-quinone oxidoreductase subunit H (Synechococcus sp. (strain JA-2-3B'a(2-13)) (Cyanobacteria bacterium Yellowstone B-Prime)).